The sequence spans 210 residues: Rho-related GTP-binding protein RhoD (210 aa).

24-31 (GDGGCGKT) contacts GTP. The Effector region motif lies at 46–54 (YTPTVFERY). Residues 71 to 75 (DTAGQ) and 129 to 132 (CKTD) each bind GTP. Cysteine 207 is modified (cysteine methyl ester). Residue cysteine 207 is the site of S-geranylgeranyl cysteine attachment. A propeptide spans 208-210 (VVT) (removed in mature form).

It belongs to the small GTPase superfamily. Rho family. As to quaternary structure, interacts (in GTP-bound form) with DIAPH2 isoform 3, DAPK3, FILIP1 and WHAMM. Interacts with PAK5. Interacts (independent of GTP-loaded status) with ANKFY1. Heart, placenta, liver, skeletal muscle, and pancreas and, with weaker intensity, in several other tissues.

The protein localises to the cell membrane. The protein resides in the early endosome. Involved in endosome dynamics. May coordinate membrane transport with the function of the cytoskeleton. Involved in the internalization and trafficking of activated tyrosine kinase receptors such as PDGFRB. Participates in the reorganization of actin cytoskeleton; the function seems to involve WHAMM and includes regulation of filopodia formation and actin filament bundling. Can modulate the effect of DAPK3 in reorganization of actin cytoskeleton and focal adhesion dissolution. In Homo sapiens (Human), this protein is Rho-related GTP-binding protein RhoD.